We begin with the raw amino-acid sequence, 577 residues long: Zinc finger-containing ubiquitin peptidase 1 (577 aa).

The C2H2-type 1 zinc-finger motif lies at 2–24 (LSCNICGETVNSEPDMKAHLIVH). The segment at 29 to 52 (IICPFCKLSGINYNEICFHIETVH) adopts a C2H2-type 2; atypical zinc-finger fold. Residues 124 to 137 (ESRKYQKSREKKPG) show a composition bias toward basic and acidic residues. A disordered region spans residues 124–145 (ESRKYQKSREKKPGLSEAQGSI). The C2H2-type 3; atypical zinc finger occupies 153 to 176 (PECPFCGKIEGCSQDMEIHVKTKH). The C2H2-type 4 zinc finger occupies 192 to 214 (YDCPMCGLVCTNYHILQEHVDLH). Positions 225-247 (DRVQCSSDRELAHRLQQEEDRKR) are MIU. Positions 238–260 (RLQQEEDRKRKSEESRQEREEFQ) are disordered. The interval 248-273 (KSEESRQEREEFQKLQRQYGLDNSGG) is zUBD/ZHA. Lysine 261 carries the N6-acetyllysine modification. Residue cysteine 359 is the Nucleophile of the active site. Histidine 490 acts as the Proton acceptor in catalysis. Residue aspartate 511 is part of the active site.

It belongs to the peptidase C78 family. ZUFSP subfamily. In terms of assembly, interacts with RPA1 and RPA2.

Its subcellular location is the cytoplasm. It is found in the nucleus. The enzyme catalyses Thiol-dependent hydrolysis of ester, thioester, amide, peptide and isopeptide bonds formed by the C-terminal Gly of ubiquitin (a 76-residue protein attached to proteins as an intracellular targeting signal).. Functionally, deubiquitinase with endodeubiquitinase activity that specifically interacts with and cleaves 'Lys-63'-linked long polyubiquitin chains. Shows only weak activity against 'Lys-11' and 'Lys-48'-linked chains. Plays an important role in genome stability pathways, functioning to prevent spontaneous DNA damage and also promote cellular survival in response to exogenous DNA damage. Modulates the ubiquitination status of replication protein A (RPA) complex proteins in response to replication stress. The chain is Zinc finger-containing ubiquitin peptidase 1 from Mus musculus (Mouse).